The sequence spans 102 residues: Class I hydrophobin 1 (102 aa).

A signal peptide spans 1–18; the sequence is MSLFKILVAAATVATALA. Disulfide bonds link cysteine 37/cysteine 84, cysteine 45/cysteine 78, cysteine 46/cysteine 63, and cysteine 85/cysteine 97.

This sequence belongs to the fungal hydrophobin family.

It is found in the secreted. It localises to the cell wall. Its function is as follows. Aerial growth, conidiation, and dispersal of filamentous fungi in the environment rely upon a capability of their secreting small amphipathic proteins called hydrophobins (HPBs) with low sequence identity. Class I can self-assemble into an outermost layer of rodlet bundles on aerial cell surfaces, conferring cellular hydrophobicity that supports fungal growth, development and dispersal; whereas Class II form highly ordered films at water-air interfaces through intermolecular interactions but contribute nothing to the rodlet structure. Hyd1 is essential for stress tolerance, conidial hydrophobicity, adhesion to insect cuticle, and insect infectivity/pathogenicity. Plays a neglectable role in hyphal growth and asexual development. In Metarhizium robertsii (strain ARSEF 23 / ATCC MYA-3075) (Metarhizium anisopliae (strain ARSEF 23)), this protein is Class I hydrophobin 1.